Reading from the N-terminus, the 182-residue chain is Large ribosomal subunit protein uL5 (182 aa).

It belongs to the universal ribosomal protein uL5 family. In terms of assembly, part of the 50S ribosomal subunit; part of the 5S rRNA/L5/L18/L25 subcomplex. Contacts the 5S rRNA and the P site tRNA. Forms a bridge to the 30S subunit in the 70S ribosome.

This is one of the proteins that bind and probably mediate the attachment of the 5S RNA into the large ribosomal subunit, where it forms part of the central protuberance. In the 70S ribosome it contacts protein S13 of the 30S subunit (bridge B1b), connecting the 2 subunits; this bridge is implicated in subunit movement. Contacts the P site tRNA; the 5S rRNA and some of its associated proteins might help stabilize positioning of ribosome-bound tRNAs. The protein is Large ribosomal subunit protein uL5 of Coxiella burnetii (strain CbuK_Q154) (Coxiella burnetii (strain Q154)).